The primary structure comprises 270 residues: Monocyte to macrophage differentiation factor 2 (270 aa).

Topologically, residues Met1–Asn38 are cytoplasmic. A helical transmembrane segment spans residues Cys39 to Leu59. Over Ser60–Glu65 the chain is Lumenal. The helical transmembrane segment at Thr66–Phe86 threads the bilayer. Topologically, residues His87–Cys102 are cytoplasmic. The helical transmembrane segment at Leu103–Leu123 threads the bilayer. Topologically, residues Asn124–Ala132 are lumenal. The helical transmembrane segment at Ser133–Phe153 threads the bilayer. The Cytoplasmic portion of the chain corresponds to His154 to Lys182. A helical membrane pass occupies residues Leu183–Met203. At Pro204–Asn205 the chain is on the lumenal side. A helical transmembrane segment spans residues Thr206 to Phe226. Residues Lys227–Pro233 are Cytoplasmic-facing. A helical transmembrane segment spans residues Phe234–Ile254. The Lumenal segment spans residues Trp255–Lys270.

Belongs to the ADIPOR family. As to expression, shows restricted expression with highest levels in brain and testis.

The protein resides in the golgi apparatus membrane. The protein is Monocyte to macrophage differentiation factor 2 of Homo sapiens (Human).